A 297-amino-acid polypeptide reads, in one-letter code: tRNA uridine(34) hydroxylase (297 aa).

The 96-residue stretch at 137 to 232 folds into the Rhodanese domain; that stretch reads RGDDVVFFDG…YGEKYGDKGL (96 aa). Catalysis depends on cysteine 192, which acts as the Cysteine persulfide intermediate.

This sequence belongs to the TrhO family.

The catalysed reaction is uridine(34) in tRNA + AH2 + O2 = 5-hydroxyuridine(34) in tRNA + A + H2O. Functionally, catalyzes oxygen-dependent 5-hydroxyuridine (ho5U) modification at position 34 in tRNAs. This Corynebacterium urealyticum (strain ATCC 43042 / DSM 7109) protein is tRNA uridine(34) hydroxylase.